The following is a 525-amino-acid chain: DEAD-box ATP-dependent RNA helicase CshA (525 aa).

The Q motif signature appears at 2-30; it reads TTFRELGLSDSLLQSVESMGFEEATPIQA. The Helicase ATP-binding domain occupies 33-203; the sequence is IPHALQGKDI…ERFMTEPQHI (171 aa). 46-53 provides a ligand contact to ATP; sequence AQTGTGKT. A DEAD box motif is present at residues 151 to 154; the sequence is DEAD. The Helicase C-terminal domain maps to 214–374; sequence NIQQFYLEVQ…RMDAPTLDEA (161 aa). Residues 428–525 form a disordered region; that stretch reads TTPIALTSEP…RKHHSRKPQA (98 aa). Basic and acidic residues predominate over residues 458 to 503; it reads DGNRNRSRDGRGGDGRNRDRNRDGRNRDGNRDRNRDGGNRGRRGEG. Residues 515 to 525 show a composition bias toward basic residues; sequence ERKHHSRKPQA.

Belongs to the DEAD box helicase family. CshA subfamily. Oligomerizes, may be a member of the RNA degradosome.

The protein resides in the cytoplasm. The catalysed reaction is ATP + H2O = ADP + phosphate + H(+). Its function is as follows. DEAD-box RNA helicase possibly involved in RNA degradation. Unwinds dsRNA in both 5'- and 3'-directions, has RNA-dependent ATPase activity. This Bacillus cereus (strain ATCC 10987 / NRS 248) protein is DEAD-box ATP-dependent RNA helicase CshA.